Here is a 113-residue protein sequence, read N- to C-terminus: Insulin (113 aa).

Residues methionine 1 to alanine 24 form the signal peptide. 3 disulfides stabilise this stretch: cysteine 32–cysteine 99, cysteine 44–cysteine 112, and cysteine 98–cysteine 103. A propeptide spans aspartate 56–valine 90 (c peptide).

It belongs to the insulin family. Heterodimer of a B chain and an A chain linked by two disulfide bonds.

It is found in the secreted. In terms of biological role, insulin decreases blood glucose concentration. It increases cell permeability to monosaccharides, amino acids and fatty acids. It accelerates glycolysis, the pentose phosphate cycle, and glycogen synthesis in liver. The polypeptide is Insulin (ins) (Oreochromis niloticus (Nile tilapia)).